Here is a 168-residue protein sequence, read N- to C-terminus: Oocyte-secreted protein 2 (168 aa).

Positions 1–21 (MGVSMALEVLVYLAVLVWTCA) are cleaved as a signal peptide.

This sequence belongs to the PLAC1 family. Expressed in ovaries. Highly expressed in the germinal vesicles oocytes and metaphase II oocytes.

It is found in the secreted. The protein resides in the cytoplasm. In Mus musculus (Mouse), this protein is Oocyte-secreted protein 2 (Oosp2).